The primary structure comprises 684 residues: Probable potassium transport system protein Kup (684 aa).

12 helical membrane-spanning segments follow: residues Ala19–Met39, Val61–Leu81, Trp104–Pro124, Gln151–Thr171, Ala177–Leu197, Met223–Ser243, Leu255–Leu275, Leu303–Gly323, Leu352–Phe372, Ala381–Leu401, Pro407–Ile427, and Phe433–Val453.

Belongs to the HAK/KUP transporter (TC 2.A.72) family.

The protein localises to the cell membrane. The enzyme catalyses K(+)(in) + H(+)(in) = K(+)(out) + H(+)(out). Transport of potassium into the cell. Likely operates as a K(+):H(+) symporter. In Lacticaseibacillus paracasei (strain ATCC 334 / BCRC 17002 / CCUG 31169 / CIP 107868 / KCTC 3260 / NRRL B-441) (Lactobacillus paracasei), this protein is Probable potassium transport system protein Kup.